The following is a 491-amino-acid chain: Protein nucleotidyltransferase YdiU (491 aa).

Positions 88, 90, 91, 111, 123, 124, 174, and 181 each coordinate ATP. The active-site Proton acceptor is aspartate 250. Mg(2+)-binding residues include asparagine 251 and aspartate 260. Aspartate 260 provides a ligand contact to ATP. Residues 466 to 484 (DDQPDRADYAEPPQPEERV) are compositionally biased toward basic and acidic residues. Residues 466–491 (DDQPDRADYAEPPQPEERVLQTFCGT) are disordered.

The protein belongs to the SELO family. Mg(2+) serves as cofactor. It depends on Mn(2+) as a cofactor.

The catalysed reaction is L-seryl-[protein] + ATP = 3-O-(5'-adenylyl)-L-seryl-[protein] + diphosphate. The enzyme catalyses L-threonyl-[protein] + ATP = 3-O-(5'-adenylyl)-L-threonyl-[protein] + diphosphate. It carries out the reaction L-tyrosyl-[protein] + ATP = O-(5'-adenylyl)-L-tyrosyl-[protein] + diphosphate. It catalyses the reaction L-histidyl-[protein] + UTP = N(tele)-(5'-uridylyl)-L-histidyl-[protein] + diphosphate. The catalysed reaction is L-seryl-[protein] + UTP = O-(5'-uridylyl)-L-seryl-[protein] + diphosphate. The enzyme catalyses L-tyrosyl-[protein] + UTP = O-(5'-uridylyl)-L-tyrosyl-[protein] + diphosphate. Its function is as follows. Nucleotidyltransferase involved in the post-translational modification of proteins. It can catalyze the addition of adenosine monophosphate (AMP) or uridine monophosphate (UMP) to a protein, resulting in modifications known as AMPylation and UMPylation. This is Protein nucleotidyltransferase YdiU from Bradyrhizobium sp. (strain ORS 278).